Consider the following 224-residue polypeptide: uncharacterized protein (224 aa).

Gly177, Ile197, and Leu206 together coordinate S-adenosyl-L-methionine.

This sequence belongs to the class IV-like SAM-binding methyltransferase superfamily. RNA methyltransferase TrmH family.

This is an uncharacterized protein from Archaeoglobus fulgidus (strain ATCC 49558 / DSM 4304 / JCM 9628 / NBRC 100126 / VC-16).